Consider the following 295-residue polypeptide: Ribosomal protein L11 methyltransferase (295 aa).

Residues Thr-146, Gly-167, Asp-189, and Asn-231 each contribute to the S-adenosyl-L-methionine site.

It belongs to the methyltransferase superfamily. PrmA family.

The protein resides in the cytoplasm. It catalyses the reaction L-lysyl-[protein] + 3 S-adenosyl-L-methionine = N(6),N(6),N(6)-trimethyl-L-lysyl-[protein] + 3 S-adenosyl-L-homocysteine + 3 H(+). Methylates ribosomal protein L11. In Vibrio parahaemolyticus serotype O3:K6 (strain RIMD 2210633), this protein is Ribosomal protein L11 methyltransferase.